The following is a 121-amino-acid chain: Small ribosomal subunit protein uS13 (121 aa).

Residues 92 to 121 (RKGLPMRGQRTRTNARTRKGPRRAAQALKK) form a disordered region.

It belongs to the universal ribosomal protein uS13 family. Part of the 30S ribosomal subunit. Forms a loose heterodimer with protein S19. Forms two bridges to the 50S subunit in the 70S ribosome.

In terms of biological role, located at the top of the head of the 30S subunit, it contacts several helices of the 16S rRNA. In the 70S ribosome it contacts the 23S rRNA (bridge B1a) and protein L5 of the 50S subunit (bridge B1b), connecting the 2 subunits; these bridges are implicated in subunit movement. Contacts the tRNAs in the A and P-sites. This chain is Small ribosomal subunit protein uS13, found in Burkholderia cenocepacia (strain HI2424).